Reading from the N-terminus, the 772-residue chain is 1,4-alpha-glucan branching enzyme GlgB (772 aa).

Asp-431 serves as the catalytic Nucleophile. The active-site Proton donor is the Glu-484.

Belongs to the glycosyl hydrolase 13 family. GlgB subfamily. In terms of assembly, monomer.

It catalyses the reaction Transfers a segment of a (1-&gt;4)-alpha-D-glucan chain to a primary hydroxy group in a similar glucan chain.. It functions in the pathway glycan biosynthesis; glycogen biosynthesis. Its function is as follows. Catalyzes the formation of the alpha-1,6-glucosidic linkages in glycogen by scission of a 1,4-alpha-linked oligosaccharide from growing alpha-1,4-glucan chains and the subsequent attachment of the oligosaccharide to the alpha-1,6 position. This is 1,4-alpha-glucan branching enzyme GlgB from Synechococcus sp. (strain RCC307).